The sequence spans 74 residues: MGGISIWQLLIIVAIVVLLFGTKKLRTLGSDLGESVKGFKKAMAEEPKDAEFKSLDKAENTAQTKKEEKEKEQA.

The helical transmembrane segment at 1–21 threads the bilayer; sequence MGGISIWQLLIIVAIVVLLFG. The segment at 45–74 is disordered; it reads EEPKDAEFKSLDKAENTAQTKKEEKEKEQA.

Belongs to the TatA/E family. In terms of assembly, the Tat system comprises two distinct complexes: a TatABC complex, containing multiple copies of TatA, TatB and TatC subunits, and a separate TatA complex, containing only TatA subunits. Substrates initially bind to the TatABC complex, which probably triggers association of the separate TatA complex to form the active translocon.

It localises to the cell inner membrane. Functionally, part of the twin-arginine translocation (Tat) system that transports large folded proteins containing a characteristic twin-arginine motif in their signal peptide across membranes. TatA could form the protein-conducting channel of the Tat system. This chain is Sec-independent protein translocase protein TatA, found in Actinobacillus succinogenes (strain ATCC 55618 / DSM 22257 / CCUG 43843 / 130Z).